Here is a 106-residue protein sequence, read N- to C-terminus: Small ribosomal subunit protein uS10 (106 aa).

It belongs to the universal ribosomal protein uS10 family. Part of the 30S ribosomal subunit.

Its function is as follows. Involved in the binding of tRNA to the ribosomes. The chain is Small ribosomal subunit protein uS10 from Pyrobaculum arsenaticum (strain DSM 13514 / JCM 11321 / PZ6).